The sequence spans 360 residues: Pyrimidine monooxygenase RutA (360 aa).

FMN is bound by residues 49-50 (IK), asparagine 115, glutamate 124, 140-141 (RY), and serine 190.

This sequence belongs to the NtaA/SnaA/DszA monooxygenase family. RutA subfamily.

It catalyses the reaction uracil + FMNH2 + NADH + O2 = (Z)-3-ureidoacrylate + FMN + NAD(+) + H2O + H(+). It carries out the reaction thymine + FMNH2 + NADH + O2 = (Z)-2-methylureidoacrylate + FMN + NAD(+) + H2O + H(+). In terms of biological role, catalyzes the pyrimidine ring opening between N-3 and C-4 by an unusual flavin hydroperoxide-catalyzed mechanism, adding oxygen atoms in the process to yield ureidoacrylate peracid, that immediately reacts with FMN forming ureidoacrylate and FMN-N(5)-oxide. The FMN-N(5)-oxide reacts spontaneously with NADH to produce FMN. Requires the flavin reductase RutF to regenerate FMN in vivo. This Bradyrhizobium sp. (strain BTAi1 / ATCC BAA-1182) protein is Pyrimidine monooxygenase RutA.